We begin with the raw amino-acid sequence, 108 residues long: Movement protein TGB2 (108 aa).

Over 1 to 14 the chain is Cytoplasmic; that stretch reads MPLTPPPDHSITYR. A helical membrane pass occupies residues 15–31; sequence ILAVGLCSCCAIYAATR. The Lumenal portion of the chain corresponds to 32 to 67; sequence STLPHTGDNLHSLPYGGKYSDGTKSICYSGPGPTPD. The chain crosses the membrane as a helical span at residues 68–85; the sequence is IPTHLPALLVLVLVVAIY. Residues 86 to 108 lie on the Cytoplasmic side of the membrane; that stretch reads ASSRLDFSVNYRCSCRVHNRSGQ.

The protein belongs to the Tymovirales TGBp2 protein family.

The protein localises to the host endoplasmic reticulum membrane. In terms of biological role, plays a role in viral cell-to-cell propagation, by facilitating genome transport to neighboring plant cells through plasmosdesmata,. In Strawberry mild yellow edge-associated virus (SMYEaV), this protein is Movement protein TGB2.